The chain runs to 442 residues: UDP-N-acetylmuramoylalanine--D-glutamate ligase (442 aa).

The protein belongs to the MurCDEF family.

Its subcellular location is the cytoplasm. The catalysed reaction is UDP-N-acetyl-alpha-D-muramoyl-L-alanine + D-glutamate + ATP = UDP-N-acetyl-alpha-D-muramoyl-L-alanyl-D-glutamate + ADP + phosphate + H(+). It functions in the pathway cell wall biogenesis; peptidoglycan biosynthesis. Functionally, cell wall formation. Catalyzes the addition of glutamate to the nucleotide precursor UDP-N-acetylmuramoyl-L-alanine (UMA). In Buchnera aphidicola subsp. Baizongia pistaciae (strain Bp), this protein is UDP-N-acetylmuramoylalanine--D-glutamate ligase.